The primary structure comprises 517 residues: Ribonuclease Y (517 aa).

The helical transmembrane segment at 1–21 (MIESLIALIAAIVGLGIGYLV) threads the bilayer. A KH domain is found at 207-273 (LINVINIKND…TKVIELLVED (67 aa)). The 94-residue stretch at 333–426 (ALAHSLEVAH…VCAADTLSAA (94 aa)) folds into the HD domain.

Belongs to the RNase Y family.

It is found in the cell membrane. Functionally, endoribonuclease that initiates mRNA decay. This is Ribonuclease Y from Campylobacter jejuni subsp. jejuni serotype O:6 (strain 81116 / NCTC 11828).